A 390-amino-acid chain; its full sequence is Glutamyl-tRNA reductase (390 aa).

Substrate contacts are provided by residues 46-49 (TCNR), Ser96, 101-103 (EAQ), and Gln107. The active-site Nucleophile is the Cys47. 176–181 (GAGEMA) is a binding site for NADP(+).

It belongs to the glutamyl-tRNA reductase family. In terms of assembly, homodimer.

It carries out the reaction (S)-4-amino-5-oxopentanoate + tRNA(Glu) + NADP(+) = L-glutamyl-tRNA(Glu) + NADPH + H(+). Its pathway is porphyrin-containing compound metabolism; protoporphyrin-IX biosynthesis; 5-aminolevulinate from L-glutamyl-tRNA(Glu): step 1/2. Functionally, catalyzes the NADPH-dependent reduction of glutamyl-tRNA(Glu) to glutamate 1-semialdehyde (GSA). The chain is Glutamyl-tRNA reductase from Thermus thermophilus (strain ATCC BAA-163 / DSM 7039 / HB27).